We begin with the raw amino-acid sequence, 334 residues long: Dihydroorotate dehydrogenase (quinone) (334 aa).

FMN is bound by residues 59-63 and T83; that span reads AGLDK. K63 lines the substrate pocket. 108–112 contacts substrate; the sequence is NRMGF. Residues N136 and N169 each coordinate FMN. Substrate is bound at residue N169. S172 functions as the Nucleophile in the catalytic mechanism. Position 174 (N174) interacts with substrate. K214 and T242 together coordinate FMN. Substrate is bound at residue 243–244; sequence NT. FMN contacts are provided by residues G265, G294, and 315-316; that span reads YS.

This sequence belongs to the dihydroorotate dehydrogenase family. Type 2 subfamily. As to quaternary structure, monomer. The cofactor is FMN.

It localises to the cell membrane. The enzyme catalyses (S)-dihydroorotate + a quinone = orotate + a quinol. It functions in the pathway pyrimidine metabolism; UMP biosynthesis via de novo pathway; orotate from (S)-dihydroorotate (quinone route): step 1/1. In terms of biological role, catalyzes the conversion of dihydroorotate to orotate with quinone as electron acceptor. In Acinetobacter baumannii (strain SDF), this protein is Dihydroorotate dehydrogenase (quinone).